We begin with the raw amino-acid sequence, 1200 residues long: Nuclear envelope pore membrane protein POM 121 (1200 aa).

Positions 1–29 (MSPAAAAADGGERRRPPLGGREGRSRARG) are disordered. The cisternal side stretch occupies residues 1-56 (MSPAAAAADGGERRRPPLGGREGRSRARGYGGPAGAAALGLALLGLALYLVPAAAA). The segment covering 10-25 (GGERRRPPLGGREGRS) has biased composition (basic and acidic residues). A helical transmembrane segment spans residues 57-77 (LAWLAVGASAAWWGLSREPRG). Residues 76–1200 (RGPRALSSFV…QARRQHTRKK (1125 aa)) form a pore side region. Position 83 is a phosphoserine (S83). 2 disordered regions span residues 91-167 (HPRP…SAVQ) and 177-196 (PTPL…GPLS). Over residues 143–152 (LRQDPRERPG) the composition is skewed to basic and acidic residues. The residue at position 244 (S244) is a Phosphoserine. Disordered regions lie at residues 294 to 328 (KKKR…SAFE), 345 to 509 (SLKR…ITAE), 530 to 627 (PDDA…SDSK), 640 to 692 (SITP…LATP), 706 to 744 (PATP…PTFK), 1075 to 1151 (TSGT…SSLS), and 1173 to 1200 (PSFS…TRKK). The segment covering 298–312 (TVAEEDQLHLDGQEN) has biased composition (basic and acidic residues). Phosphoserine occurs at positions 319, 322, 325, 345, 355, 367, and 370. Over residues 365-374 (TSSVSSLASA) the composition is skewed to low complexity. The span at 379 to 397 (IPSSSRNAITSSYSSTRGI) shows a compositional bias: polar residues. Over residues 404 to 419 (SGPTSSPFSSPASSRS) the composition is skewed to low complexity. A phosphoserine mark is found at S408, S409, S412, S413, S416, and S417. Composition is skewed to basic and acidic residues over residues 424 to 433 (RPAKKTREEE) and 446 to 456 (TDKESPGEKVT). Low complexity-rich tracts occupy residues 463–477 (QQSS…GSSG), 546–574 (PPFT…PLLE), 581–598 (ESPA…TVAA), and 605–621 (PSLL…PLAS). Residues 640–657 (SITPLTDSKSSGVSQAEQ) show a composition bias toward polar residues. Low complexity-rich tracts occupy residues 658–669 (SVSTPASTASSP), 681–692 (SPPASSSSLATP), 715–742 (SPLP…TTPT), and 1075–1099 (TSGT…GSLS). Residues 1100–1121 (QNTLGAPSQGSPFAFSVGSTPE) are compositionally biased toward polar residues. The span at 1190-1200 (LQARRQHTRKK) shows a compositional bias: basic residues.

Belongs to the POM121 family. Post-translationally, proteolytically cleaved by caspase-3 during apoptosis.

It is found in the nucleus. It localises to the nuclear pore complex. The protein resides in the nucleus membrane. Its subcellular location is the endoplasmic reticulum membrane. Essential component of the nuclear pore complex (NPC). The repeat-containing domain may be involved in anchoring components of the pore complex to the pore membrane. When overexpressed in cells induces the formation of cytoplasmic annulate lamellae (AL). In Mus musculus (Mouse), this protein is Nuclear envelope pore membrane protein POM 121 (Pom121).